A 500-amino-acid polypeptide reads, in one-letter code: Chromosomal replication initiator protein DnaA (500 aa).

Positions 1–81 are domain I, interacts with DnaA modulators; the sequence is MVNASGDPVI…LQALRTVTGE (81 aa). The tract at residues 81–155 is domain II; it reads ENMFPAFKVV…QQKMNRDPET (75 aa). Positions 156–377 are domain III, AAA+ region; it reads HLNKNFTFDS…GALTRVTAVA (222 aa). Residues glycine 200, glycine 202, lysine 203, and threonine 204 each contribute to the ATP site. A domain IV, binds dsDNA region spans residues 378 to 500; it reads SLSNQPVTRA…TVRLKQSNTN (123 aa).

This sequence belongs to the DnaA family. In terms of assembly, oligomerizes as a right-handed, spiral filament on DNA at oriC.

The protein resides in the cytoplasm. Plays an essential role in the initiation and regulation of chromosomal replication. ATP-DnaA binds to the origin of replication (oriC) to initiate formation of the DNA replication initiation complex once per cell cycle. Binds the DnaA box (a 9 base pair repeat at the origin) and separates the double-stranded (ds)DNA. Forms a right-handed helical filament on oriC DNA; dsDNA binds to the exterior of the filament while single-stranded (ss)DNA is stabiized in the filament's interior. The ATP-DnaA-oriC complex binds and stabilizes one strand of the AT-rich DNA unwinding element (DUE), permitting loading of DNA polymerase. After initiation quickly degrades to an ADP-DnaA complex that is not apt for DNA replication. Binds acidic phospholipids. The chain is Chromosomal replication initiator protein DnaA from Bifidobacterium longum subsp. infantis (strain ATCC 15697 / DSM 20088 / JCM 1222 / NCTC 11817 / S12).